The sequence spans 393 residues: Probable galacturonosyltransferase-like 8 (393 aa).

Residues 1–4 (MSSR) lie on the Cytoplasmic side of the membrane. Residues 5–25 (FSLTVVCLIALLPFVVGIRLI) form a helical; Signal-anchor for type II membrane protein membrane-spanning segment. Over 26–393 (PARITSVGDG…SELTDDSSFL (368 aa)) the chain is Lumenal. An N-linked (GlcNAc...) asparagine glycan is attached at Asn226.

This sequence belongs to the glycosyltransferase 8 family.

It localises to the golgi apparatus membrane. The protein operates within glycan metabolism; pectin biosynthesis. Functionally, may be involved in pectin and/or xylans biosynthesis in cell walls. This is Probable galacturonosyltransferase-like 8 (GATL8) from Arabidopsis thaliana (Mouse-ear cress).